The primary structure comprises 287 residues: 4-hydroxybenzoate octaprenyltransferase (287 aa).

The next 9 helical transmembrane spans lie at Val-21–Ala-41, Phe-44–Val-64, Val-91–Leu-111, Leu-112–Phe-132, Leu-139–Thr-159, Val-160–Val-180, Leu-211–Leu-231, Tyr-235–Ile-255, and Cys-263–Leu-283.

The protein belongs to the UbiA prenyltransferase family. Mg(2+) serves as cofactor.

It is found in the cell inner membrane. The enzyme catalyses all-trans-octaprenyl diphosphate + 4-hydroxybenzoate = 4-hydroxy-3-(all-trans-octaprenyl)benzoate + diphosphate. It functions in the pathway cofactor biosynthesis; ubiquinone biosynthesis. Catalyzes the prenylation of para-hydroxybenzoate (PHB) with an all-trans polyprenyl group. Mediates the second step in the final reaction sequence of ubiquinone-8 (UQ-8) biosynthesis, which is the condensation of the polyisoprenoid side chain with PHB, generating the first membrane-bound Q intermediate 3-octaprenyl-4-hydroxybenzoate. The chain is 4-hydroxybenzoate octaprenyltransferase from Coxiella burnetii (strain CbuG_Q212) (Coxiella burnetii (strain Q212)).